Here is a 108-residue protein sequence, read N- to C-terminus: Probable 4-amino-4-deoxy-L-arabinose-phosphoundecaprenol flippase subunit ArnE (108 aa).

The next 3 membrane-spanning stretches (helical) occupy residues 36-56, 58-78, and 85-105; these read SLWL…LVLQ, LDVG…TLAG, and PVDV…FQLG.

This sequence belongs to the ArnE family. Heterodimer of ArnE and ArnF.

It localises to the cell inner membrane. Its pathway is bacterial outer membrane biogenesis; lipopolysaccharide biosynthesis. Functionally, translocates 4-amino-4-deoxy-L-arabinose-phosphoundecaprenol (alpha-L-Ara4N-phosphoundecaprenol) from the cytoplasmic to the periplasmic side of the inner membrane. The sequence is that of Probable 4-amino-4-deoxy-L-arabinose-phosphoundecaprenol flippase subunit ArnE from Pseudomonas syringae pv. syringae (strain B728a).